The chain runs to 573 residues: Delta 8-(E)-sphingolipid desaturase (573 aa).

One can recognise a Cytochrome b5 heme-binding domain in the interval Ser-2 to Asp-77. Residues His-37 and His-60 each contribute to the heme site. The chain crosses the membrane as a helical span at residues Leu-228–Leu-248. The short motif at His-260 to His-264 is the Histidine box-1 element. A helical transmembrane segment spans residues Val-273–Trp-293. The Histidine box-2 signature appears at His-297–His-301. 3 helical membrane-spanning segments follow: residues Tyr-353 to Met-372, Leu-393 to Pro-413, and Val-422 to Ala-442. Residues Gln-481–His-485 carry the Histidine box-3 motif.

Belongs to the fatty acid desaturase type 1 family.

Its subcellular location is the membrane. The catalysed reaction is an N-acylsphing-4-enine + 2 Fe(II)-[cytochrome b5] + O2 + 2 H(+) = a (4E,8E)-4-sphinga-4,8-dienine ceramide + 2 Fe(III)-[cytochrome b5] + 2 H2O. The protein operates within lipid metabolism; sphingolipid metabolism. Its function is as follows. Delta(8)-fatty-acid desaturase which introduces a double bond at the 8-position in the long-chain base (LCB) of ceramides. Required for the formation of the di-unsaturated sphingoid base (E,E)-sphinga-4,8-dienine during glucosylceramide (GluCer) biosynthesis. The chain is Delta 8-(E)-sphingolipid desaturase from Kluyveromyces lactis (strain ATCC 8585 / CBS 2359 / DSM 70799 / NBRC 1267 / NRRL Y-1140 / WM37) (Yeast).